The primary structure comprises 85 residues: Conotoxin Lv15a (85 aa).

A signal peptide spans 1–23; it reads MEKLTVLILVATVLLMIQVLAQS. The propeptide occupies 24–49; sequence GGDKHLKRRPKQYATKRLSALMRGHR. Q50 is subject to Pyrrolidone carboxylic acid.

This sequence belongs to the conotoxin O2 superfamily. Post-translationally, contains 4 disulfide bonds. Expressed by the venom duct.

The protein resides in the secreted. The polypeptide is Conotoxin Lv15a (Conus lividus (Livid cone)).